The sequence spans 503 residues: UDP-N-acetylmuramoyl-L-alanyl-D-glutamate--2,6-diaminopimelate ligase (503 aa).

A UDP-N-acetyl-alpha-D-muramoyl-L-alanyl-D-glutamate-binding site is contributed by S32. 117 to 123 contacts ATP; that stretch reads GTNGKTT. Residues 159-160, S186, Q192, and R194 each bind UDP-N-acetyl-alpha-D-muramoyl-L-alanyl-D-glutamate; that span reads TT. K226 is modified (N6-carboxylysine). Meso-2,6-diaminopimelate-binding positions include R396, 420 to 423, G471, and E475; that span reads DNPR. The short motif at 420–423 is the Meso-diaminopimelate recognition motif element; the sequence is DNPR.

It belongs to the MurCDEF family. MurE subfamily. Mg(2+) serves as cofactor. Carboxylation is probably crucial for Mg(2+) binding and, consequently, for the gamma-phosphate positioning of ATP.

It localises to the cytoplasm. It catalyses the reaction UDP-N-acetyl-alpha-D-muramoyl-L-alanyl-D-glutamate + meso-2,6-diaminopimelate + ATP = UDP-N-acetyl-alpha-D-muramoyl-L-alanyl-gamma-D-glutamyl-meso-2,6-diaminopimelate + ADP + phosphate + H(+). The protein operates within cell wall biogenesis; peptidoglycan biosynthesis. Catalyzes the addition of meso-diaminopimelic acid to the nucleotide precursor UDP-N-acetylmuramoyl-L-alanyl-D-glutamate (UMAG) in the biosynthesis of bacterial cell-wall peptidoglycan. The sequence is that of UDP-N-acetylmuramoyl-L-alanyl-D-glutamate--2,6-diaminopimelate ligase from Prochlorococcus marinus (strain SARG / CCMP1375 / SS120).